Reading from the N-terminus, the 33-residue chain is uncharacterized protein (33 aa).

At 1-12 (MKENKVQQISHK) the chain is on the cytoplasmic side. Residues 13–33 (LINIVVFVAIVEYAYLFLHFY) traverse the membrane as a helical segment.

Its subcellular location is the cell inner membrane. This is an uncharacterized protein from Escherichia coli (strain K12).